The chain runs to 318 residues: Nuclear egress protein 1 (318 aa).

The CCCH-type zinc finger occupies 129-239 (CLRLSPFGHS…HLLLQGTSLH (111 aa)).

It belongs to the herpesviridae NEC1 protein family. In terms of assembly, forms a heterodimeric viral nuclear egress complex (NEC) with NEC2. Interacts with capsid vertex specific component 2/CVC2; this interaction directs the capsid to the host inner nuclear membrane to initiate budding. Phosphorylated at serine residues in the N-terminus. This phosphorylation regulates the localization within the inner nuclear membrane.

It is found in the host nucleus inner membrane. Its function is as follows. Plays an essential role in virion nuclear egress, the first step of virion release from infected cell. Within the host nucleus, NEC1 interacts with the newly formed capsid through the vertexes and directs it to the inner nuclear membrane by associating with NEC2. Induces the budding of the capsid at the inner nuclear membrane as well as its envelopment into the perinuclear space. There, the NEC1/NEC2 complex promotes the fusion of the enveloped capsid with the outer nuclear membrane and the subsequent release of the viral capsid into the cytoplasm where it will reach the secondary budding sites in the host Golgi or trans-Golgi network. The chain is Nuclear egress protein 1 from Homo sapiens (Human).